The following is an 823-amino-acid chain: Protein FAM193B (823 aa).

Disordered stretches follow at residues Met-1–Ser-78, Ser-158–Asp-191, Ser-209–Pro-281, and Cys-381–Asp-409. Positions Pro-26–Ser-36 are enriched in pro residues. Over residues Pro-52–Lys-64 the composition is skewed to basic and acidic residues. Low complexity-rich tracts occupy residues Ser-168–Ser-184 and Ser-263–Pro-281. Residues Glu-382–Ser-393 are compositionally biased toward acidic residues. Positions Gly-422 to Lys-484 form a coiled coil. 2 disordered regions span residues Phe-503–Gly-583 and Trp-599–Met-775. Polar residues-rich tracts occupy residues Leu-516–Glu-526 and Gln-641–Pro-657. 3 positions are modified to phosphoserine: Ser-694, Ser-706, and Ser-813.

Belongs to the FAM193 family.

The protein localises to the cytoplasm. It localises to the nucleus. In Bos taurus (Bovine), this protein is Protein FAM193B (FAM193B).